A 386-amino-acid polypeptide reads, in one-letter code: Short-chain dehydrogenase/reductase family 42E member 1 (386 aa).

Tyr-150 (proton acceptor) is an active-site residue. An NAD(+)-binding site is contributed by Lys-154. 2 helical membrane passes run 279–299 and 363–383; these read FPLS…FFIS and YLIW…SWLP.

The protein belongs to the 3-beta-HSD family.

It is found in the membrane. This Xenopus laevis (African clawed frog) protein is Short-chain dehydrogenase/reductase family 42E member 1 (sdr42e1).